The sequence spans 249 residues: Tabinhibitin 4 (249 aa).

The signal sequence occupies residues 1–23; sequence MTLNVYFVLLSPYSLQSVPLPLT. Residues 31 to 33 carry the Cell attachment site motif; that stretch reads RGD. The region spanning 64–207 is the SCP domain; that stretch reads LQKTNWLRGV…LKRALFTCNF (144 aa). The Cell attachment site signature appears at 220–222; the sequence is RGD.

It belongs to the CRISP family. In terms of tissue distribution, expressed in salivary glands.

The protein resides in the secreted. Functionally, inhibits platelet aggregation induced by all agonists tested (ADP, arachidonic acid, the thromboxane A2 analog U46619, thrombin, and snake venom snaclecs (TMVA that activates platelet through GPIB, and stejnulxin that specifically acts through GPVI (GP6))). May act by competing with fibrinogen for binding to glycoprotein IIb/IIIa (ITGA2B/ITGB3). This is Tabinhibitin 4 from Tabanus yao (Horsefly).